The sequence spans 388 residues: Tryptophan synthase beta chain (388 aa).

Lysine 86 is modified (N6-(pyridoxal phosphate)lysine).

This sequence belongs to the TrpB family. As to quaternary structure, tetramer of two alpha and two beta chains. Pyridoxal 5'-phosphate is required as a cofactor.

It catalyses the reaction (1S,2R)-1-C-(indol-3-yl)glycerol 3-phosphate + L-serine = D-glyceraldehyde 3-phosphate + L-tryptophan + H2O. It functions in the pathway amino-acid biosynthesis; L-tryptophan biosynthesis; L-tryptophan from chorismate: step 5/5. The beta subunit is responsible for the synthesis of L-tryptophan from indole and L-serine. The chain is Tryptophan synthase beta chain (trpB) from Buchnera aphidicola subsp. Acyrthosiphon pisum (strain APS) (Acyrthosiphon pisum symbiotic bacterium).